A 162-amino-acid chain; its full sequence is SsrA-binding protein (162 aa).

Basic and acidic residues predominate over residues His137 to Arg154. Residues His137–Gly162 form a disordered region.

Belongs to the SmpB family.

Its subcellular location is the cytoplasm. Required for rescue of stalled ribosomes mediated by trans-translation. Binds to transfer-messenger RNA (tmRNA), required for stable association of tmRNA with ribosomes. tmRNA and SmpB together mimic tRNA shape, replacing the anticodon stem-loop with SmpB. tmRNA is encoded by the ssrA gene; the 2 termini fold to resemble tRNA(Ala) and it encodes a 'tag peptide', a short internal open reading frame. During trans-translation Ala-aminoacylated tmRNA acts like a tRNA, entering the A-site of stalled ribosomes, displacing the stalled mRNA. The ribosome then switches to translate the ORF on the tmRNA; the nascent peptide is terminated with the 'tag peptide' encoded by the tmRNA and targeted for degradation. The ribosome is freed to recommence translation, which seems to be the essential function of trans-translation. The chain is SsrA-binding protein from Aeromonas hydrophila subsp. hydrophila (strain ATCC 7966 / DSM 30187 / BCRC 13018 / CCUG 14551 / JCM 1027 / KCTC 2358 / NCIMB 9240 / NCTC 8049).